Consider the following 435-residue polypeptide: Asparagine--tRNA ligase (435 aa).

It belongs to the class-II aminoacyl-tRNA synthetase family. As to quaternary structure, homodimer.

It localises to the cytoplasm. It carries out the reaction tRNA(Asn) + L-asparagine + ATP = L-asparaginyl-tRNA(Asn) + AMP + diphosphate + H(+). The polypeptide is Asparagine--tRNA ligase (Leptospira interrogans serogroup Icterohaemorrhagiae serovar copenhageni (strain Fiocruz L1-130)).